The sequence spans 2061 residues: Putative PWWP domain-containing DNA repair factor 4 (2061 aa).

10 disordered regions span residues 101–211 (TNLG…SRAR), 382–408 (ALGR…RSSV), 541–586 (TPGT…GDGS), 668–694 (PATL…GDGS), 864–910 (PTPG…SERS), 1046–1072 (PGTM…GDRS), 1159–1182 (ALHG…RGDS), 1205–1383 (KAIA…RDDK), 1521–1548 (PGAL…DSSP), and 1602–1726 (KKGK…KLAN). Basic and acidic residues-rich tracts occupy residues 133–153 (PRED…KREN) and 162–173 (ESKRALRDDRSQ). Positions 397 to 408 (TPGTLQGNRSSV) are enriched in polar residues. The segment covering 1051–1061 (GDSSTARTATA) has biased composition (polar residues). Over residues 1364 to 1373 (DSSQVHTTIA) the composition is skewed to polar residues. Positions 1639 to 1648 (LKEETQDSRP) are enriched in basic and acidic residues. The span at 1656–1665 (PESSPFSGNI) shows a compositional bias: polar residues. Positions 1756-1817 (RGTMVWFKFQ…KHLDCKEKEK (62 aa)) constitute a PWWP domain.

This sequence belongs to the PWWP3A family.

The chain is Putative PWWP domain-containing DNA repair factor 4 from Homo sapiens (Human).